Here is a 524-residue protein sequence, read N- to C-terminus: Translation initiation factor eIF2B subunit delta (524 aa).

Residues 1-174 are disordered; that stretch reads MAAVAVAVRE…RQQVPTRKDY (174 aa). Ala-2 carries the post-translational modification N-acetylalanine. Composition is skewed to basic and acidic residues over residues 8 to 20 and 31 to 40; these read VREESRSEMKTEL and LTQEEKLQLR. Ser-12 carries the phosphoserine modification. The span at 41 to 51 shows a compositional bias: basic residues; the sequence is KEKKQQKKKRK. Phosphothreonine is present on Thr-86. Composition is skewed to basic and acidic residues over residues 96-121 and 161-174; these read SKAELRAERRAKQEAERALKQARKGE and RKPDRQQVPTRKDY. The may bind the chemical integrated stress response (ISR) inhibitor ISRIB stretch occupies residues 171–180; sequence RKDYGSKVSL.

The protein belongs to the eIF-2B alpha/beta/delta subunits family. In terms of assembly, component of the translation initiation factor 2B (eIF2B) complex which is a heterodecamer of two sets of five different subunits: alpha, beta, gamma, delta and epsilon. Subunits alpha, beta and delta comprise a regulatory subcomplex and subunits epsilon and gamma comprise a catalytic subcomplex. Within the complex, the hexameric regulatory complex resides at the center, with the two heterodimeric catalytic subcomplexes bound on opposite sides.

The protein resides in the cytoplasm. It is found in the cytosol. Its activity is regulated as follows. Activated by the chemical integrated stress response (ISR) inhibitor ISRIB which stimulates guanine nucleotide exchange factor activity for both phosphorylated and unphosphorylated eIF2. Functionally, acts as a component of the translation initiation factor 2B (eIF2B) complex, which catalyzes the exchange of GDP for GTP on eukaryotic initiation factor 2 (eIF2) gamma subunit. Its guanine nucleotide exchange factor activity is repressed when bound to eIF2 complex phosphorylated on the alpha subunit, thereby limiting the amount of methionyl-initiator methionine tRNA available to the ribosome and consequently global translation is repressed. The polypeptide is Translation initiation factor eIF2B subunit delta (Eif2b4) (Rattus norvegicus (Rat)).